The primary structure comprises 169 residues: Allophycocyanin subunit beta-18 (169 aa).

Position 72 is an N4-methylasparagine (asparagine 72). Residue cysteine 82 participates in (2R,3E)-phycocyanobilin binding.

The protein belongs to the phycobiliprotein family. In terms of assembly, heterodimer of ApcE and this beta chain. Post-translationally, contains one covalently linked bilin chromophore.

It localises to the cellular thylakoid membrane. Its function is as follows. A variant beta-allophycocyanin (AP) which forms a complex with ApcE, a phycobilisome terminal emitter that influences energy transfer to photosystem II. This is Allophycocyanin subunit beta-18 (apcF) from Synechocystis sp. (strain ATCC 27184 / PCC 6803 / Kazusa).